We begin with the raw amino-acid sequence, 161 residues long: SsrA-binding protein (161 aa).

It belongs to the SmpB family.

Its subcellular location is the cytoplasm. In terms of biological role, required for rescue of stalled ribosomes mediated by trans-translation. Binds to transfer-messenger RNA (tmRNA), required for stable association of tmRNA with ribosomes. tmRNA and SmpB together mimic tRNA shape, replacing the anticodon stem-loop with SmpB. tmRNA is encoded by the ssrA gene; the 2 termini fold to resemble tRNA(Ala) and it encodes a 'tag peptide', a short internal open reading frame. During trans-translation Ala-aminoacylated tmRNA acts like a tRNA, entering the A-site of stalled ribosomes, displacing the stalled mRNA. The ribosome then switches to translate the ORF on the tmRNA; the nascent peptide is terminated with the 'tag peptide' encoded by the tmRNA and targeted for degradation. The ribosome is freed to recommence translation, which seems to be the essential function of trans-translation. The polypeptide is SsrA-binding protein (Vibrio campbellii (strain ATCC BAA-1116)).